Here is a 50-residue protein sequence, read N- to C-terminus: Mast cell degranulating peptide (50 aa).

The N-terminal stretch at 1 to 27 (MISMLRCTFFFLSVILITSYFVTPTMS) is a signal peptide. Lysine 29 carries the N6-formyllysine; partial modification. 2 disulfide bridges follow: cysteine 30–cysteine 42 and cysteine 32–cysteine 46. Residues lysine 44 and lysine 48 each carry the N6-formyllysine; partial modification. Residue asparagine 49 is modified to Asparagine amide.

In terms of tissue distribution, expressed by the venom gland.

The protein resides in the secreted. Potent anti-inflammatory agent. At low concentrations, mediates the degranulation of mast cells thus evoking an inflammatory response. Also acts as a neurotoxin capable of blocking a class of voltage-gated potassium channels. The polypeptide is Mast cell degranulating peptide (Apis mellifera (Honeybee)).